The primary structure comprises 191 residues: ECF RNA polymerase sigma factor ShbA (191 aa).

The tract at residues leucine 27–alanine 98 is sigma-70 factor domain-2. The tract at residues arginine 100–proline 122 is disordered. The segment covering methionine 112–proline 122 has biased composition (basic and acidic residues). Residues leucine 138–alanine 187 are sigma-70 factor domain-4. The H-T-H motif DNA-binding region spans alanine 160–histidine 179.

Belongs to the sigma-70 factor family. ECF subfamily.

Its function is as follows. Sigma factors are initiation factors that promote the attachment of RNA polymerase to specific initiation sites and are then released. Extracytoplasmic function (ECF) sigma factors are held in an inactive form by an anti-sigma factor until released. This alternative sigma factor governs the transcription of the principal sigma factor HrdB (SigA) throughout growth. Acts by binding to the promoter region. The chain is ECF RNA polymerase sigma factor ShbA from Streptomyces griseus subsp. griseus (strain JCM 4626 / CBS 651.72 / NBRC 13350 / KCC S-0626 / ISP 5235).